The chain runs to 214 residues: NAD(P)H-quinone oxidoreductase subunit 5, chloroplastic (214 aa).

Transmembrane regions (helical) follow at residues 84-104 (LFPL…GIPF) and 152-172 (SLAI…YSFF).

It belongs to the complex I subunit 5 family. In terms of assembly, NDH is composed of at least 16 different subunits, 5 of which are encoded in the nucleus.

It is found in the plastid. The protein resides in the chloroplast thylakoid membrane. It catalyses the reaction a plastoquinone + NADH + (n+1) H(+)(in) = a plastoquinol + NAD(+) + n H(+)(out). The enzyme catalyses a plastoquinone + NADPH + (n+1) H(+)(in) = a plastoquinol + NADP(+) + n H(+)(out). Its function is as follows. NDH shuttles electrons from NAD(P)H:plastoquinone, via FMN and iron-sulfur (Fe-S) centers, to quinones in the photosynthetic chain and possibly in a chloroplast respiratory chain. The immediate electron acceptor for the enzyme in this species is believed to be plastoquinone. Couples the redox reaction to proton translocation, and thus conserves the redox energy in a proton gradient. The chain is NAD(P)H-quinone oxidoreductase subunit 5, chloroplastic (ndhF) from Brachypodium pinnatum (Tor grass).